We begin with the raw amino-acid sequence, 350 residues long: Phosphotriesterase-related protein (350 aa).

H24, H26, E170, H202, H231, and D299 together coordinate a divalent metal cation.

It belongs to the metallo-dependent hydrolases superfamily. Phosphotriesterase family. A divalent metal cation serves as cofactor.

The protein is Phosphotriesterase-related protein of Nematostella vectensis (Starlet sea anemone).